The primary structure comprises 338 residues: uncharacterized protein (338 aa).

The tract at residues 1–72 (MASPPILSRE…LNPVEDYDSK (72 aa)) is disordered. Over residues 24-38 (GGNSEVNIDPSASSS) the composition is skewed to polar residues. Positions 49–58 (ADTKIDPHLL) are enriched in basic and acidic residues. Positions 59 to 68 (EEDDLNPVED) are enriched in acidic residues.

Its subcellular location is the cytoplasm. It localises to the nucleus. This is an uncharacterized protein from Schizosaccharomyces pombe (strain 972 / ATCC 24843) (Fission yeast).